The following is a 252-amino-acid chain: Putative phosphonates utilization ATP-binding protein PhnK (252 aa).

The region spanning 6–246 (LSVNNLTHLY…PHHPYTQLLV (241 aa)) is the ABC transporter domain. An ATP-binding site is contributed by 38–45 (GESGSGKT).

This sequence belongs to the ABC transporter superfamily. Forms a complex with PhnG, PhnH, PhnI and PhnJ with the suggested composition PhnG(4)H(2)I(2)J(2)K.

In terms of biological role, belongs to an operon involved in alkylphosphonate uptake and C-P lyase. Exact function not known. PhnK is not required for the ribophosphonate triphosphate (RPnTP) synthase reaction. The chain is Putative phosphonates utilization ATP-binding protein PhnK (phnK) from Escherichia coli (strain K12).